Here is a 61-residue protein sequence, read N- to C-terminus: Conotoxin Vn5.3 (61 aa).

Residues 1–19 (MRCLPVFVILLLLIASAPG) form the signal peptide. Residues 20–50 (VDVQPKTKYYVPRASRRDFAKKTPKRLSKLR) constitute a propeptide that is removed on maturation.

The protein belongs to the conotoxin T superfamily. Contains 2 disulfide bonds that can be either 'C1-C3, C2-C4' or 'C1-C4, C2-C3', since these disulfide connectivities have been observed for conotoxins with cysteine framework V (for examples, see AC P0DQQ7 and AC P81755). In terms of tissue distribution, expressed by the venom duct.

It localises to the secreted. This Conus ventricosus (Mediterranean cone) protein is Conotoxin Vn5.3.